A 46-amino-acid chain; its full sequence is Iota-conotoxin RXIA (46 aa).

4-hydroxyproline; partial is present on residues proline 2 and proline 11. Intrachain disulfides connect cysteine 5-cysteine 19, cysteine 12-cysteine 22, cysteine 18-cysteine 27, and cysteine 21-cysteine 38. 4-hydroxyproline is present on proline 29. Phenylalanine 44 carries the post-translational modification D-phenylalanine.

This sequence belongs to the conotoxin I1 superfamily. In terms of processing, the natural D-Phe-44 form of the peptide is more potent than the L-Phe-44 form. In terms of tissue distribution, expressed by the venom duct.

The protein resides in the secreted. Functionally, iota-conotoxins bind to voltage-gated sodium channels and act as agonists by shifting the voltage-dependence of activation to more hyperpolarized levels. This toxin acts on Nav1.6/SCN8A &gt; Nav1.2/SCN2A &gt; Nav1.7/SCN9A sodium channels. Produces general excitatory symptoms upon intracorporeal injection and repetitive action potentials in the frog cutaneous pectoris muscle. Natural peptide (with D-Phe) is active on nerve, but not on muscle. Synthetic peptide (with L-Phe) is not active on both nerve and muscle. In Conus radiatus (Rayed cone), this protein is Iota-conotoxin RXIA.